Here is a 125-residue protein sequence, read N- to C-terminus: Holo-[acyl-carrier-protein] synthase (125 aa).

The Mg(2+) site is built by D8 and E55.

The protein belongs to the P-Pant transferase superfamily. AcpS family. Mg(2+) serves as cofactor.

It localises to the cytoplasm. The catalysed reaction is apo-[ACP] + CoA = holo-[ACP] + adenosine 3',5'-bisphosphate + H(+). In terms of biological role, transfers the 4'-phosphopantetheine moiety from coenzyme A to a Ser of acyl-carrier-protein. This Treponema pallidum (strain Nichols) protein is Holo-[acyl-carrier-protein] synthase.